We begin with the raw amino-acid sequence, 327 residues long: Methionyl-tRNA formyltransferase (327 aa).

Serine 121–proline 124 lines the (6S)-5,6,7,8-tetrahydrofolate pocket.

This sequence belongs to the Fmt family.

The enzyme catalyses L-methionyl-tRNA(fMet) + (6R)-10-formyltetrahydrofolate = N-formyl-L-methionyl-tRNA(fMet) + (6S)-5,6,7,8-tetrahydrofolate + H(+). Its function is as follows. Attaches a formyl group to the free amino group of methionyl-tRNA(fMet). The formyl group appears to play a dual role in the initiator identity of N-formylmethionyl-tRNA by promoting its recognition by IF2 and preventing the misappropriation of this tRNA by the elongation apparatus. This Burkholderia pseudomallei (strain 1106a) protein is Methionyl-tRNA formyltransferase.